The primary structure comprises 923 residues: Immunomodulating metalloprotease (923 aa).

The signal sequence occupies residues 1–41 (MSLSTTAFPSLQGENMSRSPIPRHRALLAGFCLAGALSAQA). A Peptidase M60 domain is found at 450–794 (QGFTAIGRMA…FYTQWVHYWA (345 aa)). His696 lines the Zn(2+) pocket. Residue Glu697 is part of the active site. His700 is a binding site for Zn(2+).

Belongs to the peptidase M88 family. Requires Zn(2+) as cofactor.

It is found in the secreted. Its activity is regulated as follows. Proteolytic activity is blocked in the presence of EDTA. Protease that degrades several proteins of the host immune system. Cleaves P-selectin glycoprotein ligand-1 (PSGL-1), leading to its functional inhibition; PSGL-1 is a leukocyte cell-surface receptor essential for leukocyte recruitment to the site of infection. Next to PSGL-1, targets host CD43 and CD44 that are also involved in leukocyte homing. Thus, prevents neutrophil extravasation and thereby protects P.aeruginosa from neutrophil attack. Is also able to inhibit the decay accelerating factor (CD55), but not the cell-surface receptors CD46 and CD31. This is Immunomodulating metalloprotease from Pseudomonas aeruginosa (strain ATCC 15692 / DSM 22644 / CIP 104116 / JCM 14847 / LMG 12228 / 1C / PRS 101 / PAO1).